A 193-amino-acid chain; its full sequence is 3-isopropylmalate dehydratase small subunit (193 aa).

The protein belongs to the LeuD family. LeuD type 1 subfamily. Heterodimer of LeuC and LeuD.

It catalyses the reaction (2R,3S)-3-isopropylmalate = (2S)-2-isopropylmalate. It functions in the pathway amino-acid biosynthesis; L-leucine biosynthesis; L-leucine from 3-methyl-2-oxobutanoate: step 2/4. Functionally, catalyzes the isomerization between 2-isopropylmalate and 3-isopropylmalate, via the formation of 2-isopropylmaleate. This Listeria monocytogenes serotype 4b (strain CLIP80459) protein is 3-isopropylmalate dehydratase small subunit.